A 274-amino-acid polypeptide reads, in one-letter code: MQFSKMHGLGNDFMVVDAVTQNVFFSPELIRRLADRHLGVGFDQLLVVEPPYDPELDFHYRIFNADGSEVAQCGNGARCFARFVRLKGLTNKRDIRVSTANGRMVLTVTDDDLVRVNMGEPNFEPSAVPFRANKAEKTYIMRAAEQTILCGVVSMGNPHCVIQVDDVDTAAVETLGPVLESHERFPERANIGFMQVVKREHIRLRVYERGAGETQACGSGACAAVAVGIQQGLLAEEVRVELPGGRLDIAWKGPGHPLYMTGPAVHVYDGFIHL.

Residues asparagine 11, glutamine 44, and asparagine 64 each coordinate substrate. The active-site Proton donor is the cysteine 73. Residues 74 to 75 (GN), asparagine 157, asparagine 190, and 208 to 209 (ER) each bind substrate. Cysteine 217 serves as the catalytic Proton acceptor. 218–219 (GS) contributes to the substrate binding site.

This sequence belongs to the diaminopimelate epimerase family. As to quaternary structure, homodimer.

It localises to the cytoplasm. The catalysed reaction is (2S,6S)-2,6-diaminopimelate = meso-2,6-diaminopimelate. The protein operates within amino-acid biosynthesis; L-lysine biosynthesis via DAP pathway; DL-2,6-diaminopimelate from LL-2,6-diaminopimelate: step 1/1. Its function is as follows. Catalyzes the stereoinversion of LL-2,6-diaminopimelate (L,L-DAP) to meso-diaminopimelate (meso-DAP), a precursor of L-lysine and an essential component of the bacterial peptidoglycan. This chain is Diaminopimelate epimerase, found in Escherichia fergusonii (strain ATCC 35469 / DSM 13698 / CCUG 18766 / IAM 14443 / JCM 21226 / LMG 7866 / NBRC 102419 / NCTC 12128 / CDC 0568-73).